The chain runs to 370 residues: (5-formylfuran-3-yl)methyl phosphate transaminase (370 aa).

At Lys-222 the chain carries N6-(pyridoxal phosphate)lysine.

Belongs to the class-I pyridoxal-phosphate-dependent aminotransferase family. As to quaternary structure, homodimer. Pyridoxal 5'-phosphate is required as a cofactor.

It localises to the cytoplasm. The catalysed reaction is 4-(hydroxymethyl)-2-furancarboxaldehyde phosphate + L-alanine = [5-(aminomethyl)-3-furyl]methyl phosphate + pyruvate. The protein operates within cofactor biosynthesis; methanofuran biosynthesis. Its function is as follows. Catalyzes the transamination reaction between 4-(hydroxymethyl)-2-furancarboxaldehyde phosphate (4-HFC-P) and alanine to produce pyruvate and 5-(aminomethyl)-3-furanmethanol phosphate (F1-P), the precursor for the furan moiety in methanofuran. This is (5-formylfuran-3-yl)methyl phosphate transaminase from Methanocaldococcus jannaschii (strain ATCC 43067 / DSM 2661 / JAL-1 / JCM 10045 / NBRC 100440) (Methanococcus jannaschii).